Consider the following 95-residue polypeptide: Fluoride-specific ion channel FluC 1 (95 aa).

Transmembrane regions (helical) follow at residues 23-43 (LIDAPLALLGINLLGSFLMGW), 49-69 (LWGTGFLGGFTSFSAFALLMF), and 70-90 (DGAYLYAAVTVIGCVAAWLLG). Residues Gly56 and Thr59 each coordinate Na(+).

It belongs to the fluoride channel Fluc/FEX (TC 1.A.43) family.

It localises to the cell membrane. It carries out the reaction fluoride(in) = fluoride(out). With respect to regulation, na(+) is not transported, but it plays an essential structural role and its presence is essential for fluoride channel function. Fluoride-specific ion channel. Important for reducing fluoride concentration in the cell, thus reducing its toxicity. The protein is Fluoride-specific ion channel FluC 1 of Corynebacterium diphtheriae (strain ATCC 700971 / NCTC 13129 / Biotype gravis).